Consider the following 494-residue polypeptide: Sulfate adenylyltransferase subunit 1 (494 aa).

The 217-residue stretch at 24–240 (TRPLRLITCG…LELATVRSAQ (217 aa)) folds into the tr-type G domain. The segment at 33–40 (GSVDDGKS) is G1. 33 to 40 (GSVDDGKS) is a GTP binding site. The interval 91-95 (GITID) is G2. The G3 stretch occupies residues 112-115 (DTPG). GTP-binding positions include 112–116 (DTPGH) and 167–170 (NKID). The G4 stretch occupies residues 167 to 170 (NKID). The G5 stretch occupies residues 204–206 (SAL).

It belongs to the TRAFAC class translation factor GTPase superfamily. Classic translation factor GTPase family. CysN/NodQ subfamily. In terms of assembly, heterodimer composed of CysD, the smaller subunit, and CysN.

The enzyme catalyses sulfate + ATP + H(+) = adenosine 5'-phosphosulfate + diphosphate. It functions in the pathway sulfur metabolism; hydrogen sulfide biosynthesis; sulfite from sulfate: step 1/3. Functionally, with CysD forms the ATP sulfurylase (ATPS) that catalyzes the adenylation of sulfate producing adenosine 5'-phosphosulfate (APS) and diphosphate, the first enzymatic step in sulfur assimilation pathway. APS synthesis involves the formation of a high-energy phosphoric-sulfuric acid anhydride bond driven by GTP hydrolysis by CysN coupled to ATP hydrolysis by CysD. The sequence is that of Sulfate adenylyltransferase subunit 1 from Rhizobium rhizogenes (strain K84 / ATCC BAA-868) (Agrobacterium radiobacter).